A 609-amino-acid polypeptide reads, in one-letter code: UvrABC system protein C (609 aa).

The GIY-YIG domain occupies 15–92 (TGSGVYQMQD…IKQFRPRYNV (78 aa)). The region spanning 202–237 (DQVIIKLTERMEVTSENLVFEEAAHYRDQIRQLRRL) is the UVR domain.

It belongs to the UvrC family. Interacts with UvrB in an incision complex.

Its subcellular location is the cytoplasm. In terms of biological role, the UvrABC repair system catalyzes the recognition and processing of DNA lesions. UvrC both incises the 5' and 3' sides of the lesion. The N-terminal half is responsible for the 3' incision and the C-terminal half is responsible for the 5' incision. This chain is UvrABC system protein C, found in Coxiella burnetii (strain RSA 493 / Nine Mile phase I).